We begin with the raw amino-acid sequence, 202 residues long: Small ribosomal subunit protein uS4 (202 aa).

A disordered region spans residues 21–42 (LSRKSPRRAYPPGQHGQARRKR). The region spanning 90 to 152 (MRLDNTVFRL…DRSRKLVETN (63 aa)) is the S4 RNA-binding domain.

Belongs to the universal ribosomal protein uS4 family. In terms of assembly, part of the 30S ribosomal subunit. Contacts protein S5. The interaction surface between S4 and S5 is involved in control of translational fidelity.

Its function is as follows. One of the primary rRNA binding proteins, it binds directly to 16S rRNA where it nucleates assembly of the body of the 30S subunit. In terms of biological role, with S5 and S12 plays an important role in translational accuracy. The sequence is that of Small ribosomal subunit protein uS4 from Synechocystis sp. (strain ATCC 27184 / PCC 6803 / Kazusa).